The following is a 993-amino-acid chain: UPF0182 protein MAV_4137 (993 aa).

Transmembrane regions (helical) follow at residues 18-38 (ILIL…RLID), 63-83 (FVVF…GLAV), 113-133 (LVSI…AQSY), 175-195 (FVAV…FGGI), 210-230 (IQLV…YWLD), 254-274 (AVLP…AAVF), and 287-307 (IGLV…PLIV). A disordered region spans residues 903–941 (NIQPTEGGAPAASPPANAPAPAVTPGSAPPVAAPPVPDG). Pro residues predominate over residues 929–939 (SAPPVAAPPVP).

The protein belongs to the UPF0182 family.

The protein resides in the cell membrane. In Mycobacterium avium (strain 104), this protein is UPF0182 protein MAV_4137.